We begin with the raw amino-acid sequence, 355 residues long: Carbohydrate sulfotransferase 10 (355 aa).

Residues 1 to 6 are Cytoplasmic-facing; sequence MHHRWL. The helical; Signal-anchor for type II membrane protein transmembrane segment at 7-27 threads the bilayer; sequence LLVACFWVLFMLMVASKLITL. The Lumenal portion of the chain corresponds to 28 to 355; the sequence is TMKDPEGYGN…FGYKEPTFLF (328 aa). Residues asparagine 93 and asparagine 98 are each glycosylated (N-linked (GlcNAc...) asparagine). 3'-phosphoadenylyl sulfate contacts are provided by residues 126–132 and 188–196; these read PKVGNTQ and RDPFERLIS. Residue asparagine 316 is glycosylated (N-linked (GlcNAc...) asparagine).

This sequence belongs to the sulfotransferase 2 family.

Its subcellular location is the golgi apparatus membrane. In terms of biological role, catalyzes the transfer of sulfate to position 3 of terminal glucuronic acid of both protein- and lipid-linked oligosaccharides. Participates in biosynthesis of HNK-1 carbohydrate structure, a sulfated glucuronyl-lactosaminyl residue carried by many neural recognition molecules. The polypeptide is Carbohydrate sulfotransferase 10 (chst10) (Xenopus laevis (African clawed frog)).